A 206-amino-acid polypeptide reads, in one-letter code: Small ribosomal subunit protein uS4 (206 aa).

In terms of domain architecture, S4 RNA-binding spans 96-158; it reads SRLDNVVYRM…AKGQLRIKGA (63 aa).

The protein belongs to the universal ribosomal protein uS4 family. Part of the 30S ribosomal subunit. Contacts protein S5. The interaction surface between S4 and S5 is involved in control of translational fidelity.

In terms of biological role, one of the primary rRNA binding proteins, it binds directly to 16S rRNA where it nucleates assembly of the body of the 30S subunit. Functionally, with S5 and S12 plays an important role in translational accuracy. This chain is Small ribosomal subunit protein uS4, found in Coxiella burnetii (strain CbuK_Q154) (Coxiella burnetii (strain Q154)).